Consider the following 360-residue polypeptide: 1-deoxy-D-xylulose 5-phosphate reductoisomerase (360 aa).

NADPH contacts are provided by S7, G8, S9, I10, and N115. A 1-deoxy-D-xylulose 5-phosphate-binding site is contributed by K116. E117 lines the NADPH pocket. Residue D135 coordinates Mn(2+). 1-deoxy-D-xylulose 5-phosphate is bound by residues S136, E137, S159, and H182. E137 contributes to the Mn(2+) binding site. Residue G188 coordinates NADPH. S195, N200, K201, and E204 together coordinate 1-deoxy-D-xylulose 5-phosphate. E204 contacts Mn(2+).

Belongs to the DXR family. The cofactor is Mg(2+). Requires Mn(2+) as cofactor.

The catalysed reaction is 2-C-methyl-D-erythritol 4-phosphate + NADP(+) = 1-deoxy-D-xylulose 5-phosphate + NADPH + H(+). The protein operates within isoprenoid biosynthesis; isopentenyl diphosphate biosynthesis via DXP pathway; isopentenyl diphosphate from 1-deoxy-D-xylulose 5-phosphate: step 1/6. Catalyzes the NADPH-dependent rearrangement and reduction of 1-deoxy-D-xylulose-5-phosphate (DXP) to 2-C-methyl-D-erythritol 4-phosphate (MEP). The chain is 1-deoxy-D-xylulose 5-phosphate reductoisomerase from Campylobacter fetus subsp. fetus (strain 82-40).